A 272-amino-acid chain; its full sequence is uncharacterized protein (272 aa).

The protein resides in the periplasm. May be involved in ulvan degradation. Ulvan is the main polysaccharide component of the Ulvales (green seaweed) cell wall. It is composed of disaccharide building blocks comprising 3-sulfated rhamnose (Rha3S) linked to D-glucuronic acid (GlcA), L-iduronic acid (IduA), or D-xylose (Xyl). This is an uncharacterized protein from Formosa agariphila (strain DSM 15362 / KCTC 12365 / LMG 23005 / KMM 3901 / M-2Alg 35-1).